The sequence spans 101 residues: Large ribosomal subunit protein uL23 (101 aa).

The protein belongs to the universal ribosomal protein uL23 family. As to quaternary structure, part of the 50S ribosomal subunit. Contacts protein L29, and trigger factor when it is bound to the ribosome.

One of the early assembly proteins it binds 23S rRNA. One of the proteins that surrounds the polypeptide exit tunnel on the outside of the ribosome. Forms the main docking site for trigger factor binding to the ribosome. In Paenarthrobacter aurescens (strain TC1), this protein is Large ribosomal subunit protein uL23.